Reading from the N-terminus, the 846-residue chain is MKLLSFKKKPSLTKSQSCPDKLKNLKEQQKDPKNGANYDTATIKSYTLQQHQQQQQQQREDNNMINNENEDFSFNYFDYDEDQESTYSREERLFFSIWRNNKIKRCIFHHLEIFNLMNNINDPITLDQLNLIDSGKLRDYCKIVKIEKNEKIELQCMPIPNHIEKLIFSNEFDKPIKAGTIPQSVVEIEFGEKFNQVLKQGQLPPSLEILKFGKRFNQMVTHSTGELPTSLTTLIFGNNFDQIILKNFIPPNVSTLIFGLNFDQPLSPGYIPSSVTKLEFQENFNQPLTIGTIPKNVKHLKIFSKFPLNQGAIPQSCTTLYYGGDCNQGTKNIPDSVKSLHFLQSIDCNNLTKERSLSKSSSSISLDISGGGSGSGSGVNSTTTSEKITFLQPESICKSVTNLTIELNQGPPNKKYLPMNSVTQLSLGINEFKKPLKSSYIPNCCTSLLLNIGPDYKFQQLLSKSIPSSVTALQFGPNFNLTIMPNSLPIHLRSIDFGDGFNQQLLQNSLPTLIDSIKFGNSYNQPISNNVLSNSNYLTSIEFGKSFDQPLIIGNGIGNLNNNNINNNVTNSNLPITLNKLKFSKDSNFKSLLKIESDSMIEEIEFGDQYNEEFNNQCSLGCTHLLSIKFGENFNQPINNLPISIKKLIFGNSFNQSIKNLPENLTSLSLGTSFSQNLINLPNSLIELKMFNKDFLNNLNFSNNNNENNNENNNENNNENNNENNNENNNNTNSFNDFIKNTTIKRIKVPCLITTLNFIVEKNKSKNCSLLKFYCFVVANNNYTNLVKYNLLLNKSYFEKWSKKKEGQSPRKQRKKKIPTDQRSTKLLLVRKFLYQVFFFFFFFFF.

A compositionally biased stretch (basic residues) spans 1–11 (MKLLSFKKKPS). The tract at residues 1-39 (MKLLSFKKKPSLTKSQSCPDKLKNLKEQQKDPKNGANYD) is disordered. The segment covering 20–33 (DKLKNLKEQQKDPK) has biased composition (basic and acidic residues). FNIP repeat units follow at residues 159–193 (IPNH…FGEK), 194–239 (FNQV…FGNN), 240–283 (FDQI…FQEN), and 284–325 (FNQP…YGGD). Residues 362–384 (SSISLDISGGGSGSGSGVNSTTT) form a disordered region. FNIP repeat units lie at residues 458–500 (FQQL…FGDG), 501–546 (FNQQ…FGKS), and 654–693 (FNQS…MFNK). Residues 702–734 (SNNNNENNNENNNENNNENNNENNNENNNNTNS) are disordered. A coiled-coil region spans residues 702–734 (SNNNNENNNENNNENNNENNNENNNENNNNTNS).

The protein is FNIP repeat-containing protein DDB_G0289381 of Dictyostelium discoideum (Social amoeba).